A 322-amino-acid polypeptide reads, in one-letter code: 4-diphosphocytidyl-2-C-methyl-D-erythritol kinase (322 aa).

The active site involves lysine 18. 130–140 lines the ATP pocket; the sequence is PMGAGLGGGSS. Aspartate 172 is a catalytic residue.

The protein belongs to the GHMP kinase family. IspE subfamily.

It carries out the reaction 4-CDP-2-C-methyl-D-erythritol + ATP = 4-CDP-2-C-methyl-D-erythritol 2-phosphate + ADP + H(+). The protein operates within isoprenoid biosynthesis; isopentenyl diphosphate biosynthesis via DXP pathway; isopentenyl diphosphate from 1-deoxy-D-xylulose 5-phosphate: step 3/6. In terms of biological role, catalyzes the phosphorylation of the position 2 hydroxy group of 4-diphosphocytidyl-2C-methyl-D-erythritol. In Psychrobacter arcticus (strain DSM 17307 / VKM B-2377 / 273-4), this protein is 4-diphosphocytidyl-2-C-methyl-D-erythritol kinase.